A 241-amino-acid chain; its full sequence is Triosephosphate isomerase (241 aa).

9–11 is a substrate binding site; that stretch reads NWK. Histidine 96 functions as the Electrophile in the catalytic mechanism. Glutamate 165 (proton acceptor) is an active-site residue. Substrate is bound by residues glycine 171, serine 204, and 225-226; that span reads GG.

The protein belongs to the triosephosphate isomerase family. In terms of assembly, homodimer.

It is found in the cytoplasm. The catalysed reaction is D-glyceraldehyde 3-phosphate = dihydroxyacetone phosphate. The protein operates within carbohydrate biosynthesis; gluconeogenesis. It functions in the pathway carbohydrate degradation; glycolysis; D-glyceraldehyde 3-phosphate from glycerone phosphate: step 1/1. Its function is as follows. Involved in the gluconeogenesis. Catalyzes stereospecifically the conversion of dihydroxyacetone phosphate (DHAP) to D-glyceraldehyde-3-phosphate (G3P). This Trichodesmium erythraeum (strain IMS101) protein is Triosephosphate isomerase.